A 170-amino-acid chain; its full sequence is Photosystem I assembly protein Ycf3 (170 aa).

3 TPR repeats span residues Ala-35–Pro-68, Ser-72–Leu-105, and Gly-120–Asn-153.

This sequence belongs to the Ycf3 family.

It localises to the plastid. Its subcellular location is the chloroplast thylakoid membrane. Functionally, essential for the assembly of the photosystem I (PSI) complex. May act as a chaperone-like factor to guide the assembly of the PSI subunits. The sequence is that of Photosystem I assembly protein Ycf3 from Zea mays (Maize).